Here is a 513-residue protein sequence, read N- to C-terminus: GMP synthase [glutamine-hydrolyzing] (513 aa).

Residues 8–198 (MILVLDFGSQ…VFGVCECEGE (191 aa)) enclose the Glutamine amidotransferase type-1 domain. The active-site Nucleophile is cysteine 85. Residues histidine 172 and glutamate 174 contribute to the active site. In terms of domain architecture, GMPS ATP-PPase spans 199-388 (WSMENFIEIE…LGIPDEIVWR (190 aa)). Position 227–233 (227–233 (GGVDSSV)) interacts with ATP.

Homodimer.

It carries out the reaction XMP + L-glutamine + ATP + H2O = GMP + L-glutamate + AMP + diphosphate + 2 H(+). Its pathway is purine metabolism; GMP biosynthesis; GMP from XMP (L-Gln route): step 1/1. In terms of biological role, catalyzes the synthesis of GMP from XMP. The protein is GMP synthase [glutamine-hydrolyzing] (guaA) of Bacillus subtilis (strain 168).